The chain runs to 316 residues: MSIDLEWNGLDSSLASSLIDALNRQLSSTSRPSFIGPIEVTSFDFGSVSPDIELVDLRDIYRDFLEDDEDAEDVEKEAVKESQWTDEEDDFEWISRKAVRGKGLPQDVPAYHLLPPHMRYGRGVPMDMFASTPSLRPTRDIVSVTFPLRVRNGSRPPHQPDGQEPNPHPNLQLHLHITWNSNLRLTLTTSLLINYPSPMFMSLPIKLSVTGLLFNGEVVVAYEGERRRVHFETPPEADEDMPAAAAGTARAGKPLPIGQRLLPSIYIESEIGQADKHVLKNVTRVERFIQDVIRKTIEEELVFPNFHTLVLGDSGS.

Residues 1–312 (MSIDLEWNGL…FPNFHTLVLG (312 aa)) enclose the SMP-LTD domain.

Belongs to the MDM12 family. Component of the ER-mitochondria encounter structure (ERMES) or MDM complex, composed of MMM1, MDM10, MDM12 and MDM34. An MMM1 homodimer associates with one molecule of MDM12 on each side in a pairwise head-to-tail manner, and the SMP-LTD domains of MMM1 and MDM12 generate a continuous hydrophobic tunnel for phospholipid trafficking.

It localises to the mitochondrion outer membrane. It is found in the endoplasmic reticulum membrane. Functionally, component of the ERMES/MDM complex, which serves as a molecular tether to connect the endoplasmic reticulum (ER) and mitochondria. Components of this complex are involved in the control of mitochondrial shape and protein biogenesis, and function in nonvesicular lipid trafficking between the ER and mitochondria. MDM12 is required for the interaction of the ER-resident membrane protein MMM1 and the outer mitochondrial membrane-resident beta-barrel protein MDM10. The MDM12-MMM1 subcomplex functions in the major beta-barrel assembly pathway that is responsible for biogenesis of all mitochondrial outer membrane beta-barrel proteins, and acts in a late step after the SAM complex. The MDM10-MDM12-MMM1 subcomplex further acts in the TOM40-specific pathway after the action of the MDM12-MMM1 complex. Essential for establishing and maintaining the structure of mitochondria and maintenance of mtDNA nucleoids. The chain is Mitochondrial distribution and morphology protein 12 from Postia placenta (strain ATCC 44394 / Madison 698-R) (Brown rot fungus).